The following is a 142-amino-acid chain: Sorting nexin-3 (142 aa).

The PX domain occupies 21-138 (NFLEIEVRNP…AAFVQDPNWD (118 aa)). The a 1,2-diacyl-sn-glycero-3-phospho-(1D-myo-inositol-3-phosphate) site is built by Arg64, Ser66, Lys90, Arg95, and Arg104.

It belongs to the sorting nexin family.

It localises to the cytoplasm. It is found in the golgi apparatus membrane. The protein resides in the prevacuolar compartment membrane. Its function is as follows. Required for retention of late Golgi membrane proteins. Component of the retrieval machinery that functions by direct interaction with the cytosolic tails of certain TGN membrane proteins during the sorting/budding process at the prevacuolar compartment. Binds phosphatidylinositol 3-phosphate (PtdIns(P3)). The sequence is that of Sorting nexin-3 (snx-3) from Neurospora crassa (strain ATCC 24698 / 74-OR23-1A / CBS 708.71 / DSM 1257 / FGSC 987).